The primary structure comprises 654 residues: Acetyl-coenzyme A synthetase (654 aa).

Residues 196-199 (RGGK) and Thr316 each bind CoA. ATP-binding positions include 392–394 (GEP), 416–421 (DTWWQT), Asp507, and Arg522. Ser530 is a CoA binding site. Arg533 contacts ATP. Residues Val544 and Val549 each contribute to the Mg(2+) site. An N6-acetyllysine modification is found at Lys619.

The protein belongs to the ATP-dependent AMP-binding enzyme family. The cofactor is Mg(2+). Acetylated. Deacetylation by the SIR2-homolog deacetylase activates the enzyme.

It catalyses the reaction acetate + ATP + CoA = acetyl-CoA + AMP + diphosphate. Functionally, catalyzes the conversion of acetate into acetyl-CoA (AcCoA), an essential intermediate at the junction of anabolic and catabolic pathways. AcsA undergoes a two-step reaction. In the first half reaction, AcsA combines acetate with ATP to form acetyl-adenylate (AcAMP) intermediate. In the second half reaction, it can then transfer the acetyl group from AcAMP to the sulfhydryl group of CoA, forming the product AcCoA. This chain is Acetyl-coenzyme A synthetase, found in Chromobacterium violaceum (strain ATCC 12472 / DSM 30191 / JCM 1249 / CCUG 213 / NBRC 12614 / NCIMB 9131 / NCTC 9757 / MK).